Here is a 349-residue protein sequence, read N- to C-terminus: Ion-translocating oxidoreductase complex subunit D (349 aa).

The next 3 helical transmembrane spans lie at 20-42 (VMQR…FGWG), 77-99 (SAML…WMIV), and 124-144 (AMAA…TWIA). Thr185 carries the post-translational modification FMN phosphoryl threonine. Transmembrane regions (helical) follow at residues 212–232 (STGV…LVLL), 239–259 (WHIS…GFLL), 265–285 (ASPL…FIAT), 291–311 (ATSP…VYII), and 315–335 (GGYP…APFI).

Belongs to the NqrB/RnfD family. In terms of assembly, the complex is composed of six subunits: RnfA, RnfB, RnfC, RnfD, RnfE and RnfG. The cofactor is FMN.

It localises to the cell inner membrane. In terms of biological role, part of a membrane-bound complex that couples electron transfer with translocation of ions across the membrane. In Shewanella baltica (strain OS195), this protein is Ion-translocating oxidoreductase complex subunit D.